Reading from the N-terminus, the 375-residue chain is Formate dehydrogenase (375 aa).

Residues Ile-94 and Asn-120 each coordinate substrate. Residues 175–176 (RI), Asp-196, 231–235 (PLHEK), Thr-257, Asp-283, 312–315 (HMSG), and Ser-358 each bind NAD(+).

It belongs to the D-isomer specific 2-hydroxyacid dehydrogenase family. FDH subfamily. As to quaternary structure, homodimer.

The protein localises to the cytoplasm. It carries out the reaction formate + NAD(+) = CO2 + NADH. Its function is as follows. Catalyzes the NAD(+)-dependent oxidation of formate to carbon dioxide. Formate oxidation is the final step in the methanol oxidation pathway in methylotrophic microorganisms. Has a role in the detoxification of exogenous formate in non-methylotrophic organisms. The chain is Formate dehydrogenase from Neurospora crassa (strain ATCC 24698 / 74-OR23-1A / CBS 708.71 / DSM 1257 / FGSC 987).